Consider the following 307-residue polypeptide: MEILAPSSYFSSSSWFLEESRSTTRWTAAENKAFENALAVFDENTPNRWERVAERVPGKTVGDVMRQYKELEDDVSSIEAGFVPVPGYSTSSPFTLEWGSGHGFDGFKQSYGTGGRKSSSGRPSEQERKKGVPWTEEEHKLFLMGLKKYGKGDWRNISRNFVITRTPTQVASHAQKYFIRQLSGGKDKRRASIHDITTVNLSDNQTPSPDNKKPPSSPDHSMAQQQTSSTSIHKLPFQWDQTSNETIMGFASSGHHGNMFQSNPFGMNSYGFKMQGQQMQRGGFCDTYLGSQNMAFQMQSGLHFPNA.

In terms of domain architecture, SANT spans Arg-21–Asp-74. A disordered region spans residues Gln-109–Pro-133. Basic and acidic residues predominate over residues Ser-124–Pro-133. Residues Gln-126 to Leu-182 enclose the HTH myb-type domain. The segment at residues Trp-154–Phe-178 is a DNA-binding region (H-T-H motif). Composition is skewed to polar residues over residues Ile-196–Thr-206 and Met-222–Ser-231. Residues Ile-196–Ser-231 are disordered.

The protein localises to the nucleus. In terms of biological role, involved in the dorsovental asymmetry of flowers. Promotes ventral identity. The polypeptide is Transcription factor DIVARICATA (DIVARICATA) (Antirrhinum majus (Garden snapdragon)).